Consider the following 186-residue polypeptide: MDNVNLTDNFLIAMPTLEDPYFSNALVYICEHNENGALGIIVNRPIDMNLASLLEKIDIKLEAENLADMPVYFGGPVQLDRGFVLHRPIGQWQSTLAINSDVGLTSSRDVLSSVGSAGLPAEILVTLGYAGWDAGQLEEELAQNSWLTVPAKASILFDLPPEERLPAAMQKLGISFTQLSDVAGHA.

The protein belongs to the UPF0301 (AlgH) family.

The chain is UPF0301 protein Daro_3893 from Dechloromonas aromatica (strain RCB).